The sequence spans 64 residues: Large ribosomal subunit protein uL29 (64 aa).

It belongs to the universal ribosomal protein uL29 family.

In Maridesulfovibrio salexigens (strain ATCC 14822 / DSM 2638 / NCIMB 8403 / VKM B-1763) (Desulfovibrio salexigens), this protein is Large ribosomal subunit protein uL29.